A 369-amino-acid polypeptide reads, in one-letter code: Core histone macro-H2A.1 (369 aa).

The Histone H2A domain maps to 2–117 (SSRGGKKKST…NIHPELLAKK (116 aa)). Lys7 and Lys9 each carry N6-lactoyllysine; alternate. Residue Lys18 is modified to N6-methyllysine. Lys116 carries the post-translational modification N6-acetyllysine; alternate. Residue Lys116 forms a Glycyl lysine isopeptide (Lys-Gly) (interchain with G-Cter in ubiquitin); alternate linkage. Residue Lys117 forms a Glycyl lysine isopeptide (Lys-Gly) (interchain with G-Cter in ubiquitin) linkage. At Lys123 the chain carries N6-acetyllysine; alternate. Lys123 bears the N6,N6-dimethyllysine; alternate mark. Lys123 participates in a covalent cross-link: Glycyl lysine isopeptide (Lys-Gly) (interchain with G-Cter in SUMO2); alternate. A disordered region spans residues 128–180 (ITPPPAKKAKSPSQKKPVAKKTGGKKGARKSKKKQGEVSKAASADSTTEGTPT). Thr129 is subject to Phosphothreonine. A compositionally biased stretch (basic residues) spans 144–160 (PVAKKTGGKKGARKSKK). Residue Lys167 forms a Glycyl lysine isopeptide (Lys-Gly) (interchain with G-Cter in SUMO2) linkage. Phosphoserine is present on residues Ser170 and Ser173. Thr178 carries the phosphothreonine modification. The region spanning 184–367 (TVLSTKSLFL…IYVQEMAKLD (184 aa)) is the Macro domain. Lys189 is covalently cross-linked (Glycyl lysine isopeptide (Lys-Gly) (interchain with G-Cter in SUMO2)). The a glycoprotein site is built by Asp203, Ile204, Val226, Ser275, Gly312, Ser313, Gly314, and Asn316. A Glycyl lysine isopeptide (Lys-Gly) (interchain with G-Cter in SUMO2) cross-link involves residue Lys320.

The protein belongs to the histone H2A family. In terms of assembly, the nucleosome is a histone octamer containing two molecules each of H2A, H2B, H3 and H4 assembled in one H3-H4 heterotetramer and two H2A-H2B heterodimers. Interacts with HDAC1 and HDAC2. Interacts with SPOP. Part of a complex consisting of MACROH2A1, CUL3 and SPOP. Interacts with PARP1. Monoubiquitinated at either Lys-116 or Lys-117. May also be polyubiquitinated. Ubiquitination is mediated by the CUL3/SPOP E3 complex and does not promote proteasomal degradation. Instead, it is required for enrichment in inactive X chromosome chromatin. Widely expressed, with high levels in testis. Present in liver, kidney and adrenal gland (at protein level). In the liver, present in hepatocytes and at a lesser extent in cells of the bile ducts. In the kidney, expressed in proximal and distal convoluted tubules and in straight proximal tubules. In the adrenal gland, present in inner cells of the cortex and medulla.

It localises to the nucleus. The protein localises to the chromosome. Variant histone H2A which replaces conventional H2A in a subset of nucleosomes where it represses transcription. Nucleosomes wrap and compact DNA into chromatin, limiting DNA accessibility to the cellular machineries which require DNA as a template. Histones thereby play a central role in transcription regulation, DNA repair, DNA replication and chromosomal stability. DNA accessibility is regulated via a complex set of post-translational modifications of histones, also called histone code, and nucleosome remodeling. Involved in stable X chromosome inactivation. Inhibits the binding of transcription factors, including NF-kappa-B, and interferes with the activity of remodeling SWI/SNF complexes. Inhibits histone acetylation by EP300 and recruits class I HDACs, which induces a hypoacetylated state of chromatin. Its function is as follows. Isoform that specifically binds poly-ADP-ribose and O-acetyl-ADP-ribose and plays a key role in NAD(+) metabolism. Able to bind to the ends of poly-ADP-ribose chains created by PARP1 and cap them. This prevents PARP1 from further addition of ADP-ribose and thus limits the consumption of nuclear NAD(+), allowing the cell to maintain proper NAD(+) levels in both the nucleus and the mitochondria to promote proper mitochondrial respiration. Increases the expression of genes involved in redox metabolism, including SOD3. Functionally, in contrast to isoform 1, does not bind poly-ADP-ribose. Represses SOD3 gene expression. This Mus musculus (Mouse) protein is Core histone macro-H2A.1.